A 114-amino-acid polypeptide reads, in one-letter code: Hydrogenase maturation factor HypA (114 aa).

H2 lines the Ni(2+) pocket. Zn(2+) is bound by residues C73, C76, C90, and C93.

The protein belongs to the HypA/HybF family.

Involved in the maturation of [NiFe] hydrogenases. Required for nickel insertion into the metal center of the hydrogenase. In Chloroflexus aggregans (strain MD-66 / DSM 9485), this protein is Hydrogenase maturation factor HypA.